Consider the following 845-residue polypeptide: Protein translocase subunit SecA 1 (845 aa).

ATP contacts are provided by residues Gln-85, 103–107 (GEGKT), and Asp-492.

Belongs to the SecA family. As to quaternary structure, monomer and homodimer. Part of the essential Sec protein translocation apparatus which comprises SecA, SecYEG and auxiliary proteins SecDF. Other proteins may also be involved.

Its subcellular location is the cell membrane. It localises to the cytoplasm. It catalyses the reaction ATP + H2O + cellular proteinSide 1 = ADP + phosphate + cellular proteinSide 2.. Its function is as follows. Part of the Sec protein translocase complex. Interacts with the SecYEG preprotein conducting channel. Has a central role in coupling the hydrolysis of ATP to the transfer of proteins into and across the cell membrane, serving as an ATP-driven molecular motor driving the stepwise translocation of polypeptide chains across the membrane. The protein is Protein translocase subunit SecA 1 of Corynebacterium glutamicum (strain ATCC 13032 / DSM 20300 / JCM 1318 / BCRC 11384 / CCUG 27702 / LMG 3730 / NBRC 12168 / NCIMB 10025 / NRRL B-2784 / 534).